The following is a 68-amino-acid chain: Protein SlyX homolog (68 aa).

The protein belongs to the SlyX family.

In Pseudomonas putida (strain GB-1), this protein is Protein SlyX homolog.